Here is a 368-residue protein sequence, read N- to C-terminus: tRNA 2-selenouridine synthase (368 aa).

The region spanning 15–138 is the Rhodanese domain; sequence FLNQHPIMDV…MRQYLIGVIE (124 aa). The active-site S-selanylcysteine intermediate is the Cys98.

It belongs to the SelU family. In terms of assembly, monomer.

The enzyme catalyses 5-methylaminomethyl-2-thiouridine(34) in tRNA + selenophosphate + (2E)-geranyl diphosphate + H2O + H(+) = 5-methylaminomethyl-2-selenouridine(34) in tRNA + (2E)-thiogeraniol + phosphate + diphosphate. It catalyses the reaction 5-methylaminomethyl-2-thiouridine(34) in tRNA + (2E)-geranyl diphosphate = 5-methylaminomethyl-S-(2E)-geranyl-thiouridine(34) in tRNA + diphosphate. It carries out the reaction 5-methylaminomethyl-S-(2E)-geranyl-thiouridine(34) in tRNA + selenophosphate + H(+) = 5-methylaminomethyl-2-(Se-phospho)selenouridine(34) in tRNA + (2E)-thiogeraniol. The catalysed reaction is 5-methylaminomethyl-2-(Se-phospho)selenouridine(34) in tRNA + H2O = 5-methylaminomethyl-2-selenouridine(34) in tRNA + phosphate. Functionally, involved in the post-transcriptional modification of the uridine at the wobble position (U34) of tRNA(Lys), tRNA(Glu) and tRNA(Gln). Catalyzes the conversion of 2-thiouridine (S2U-RNA) to 2-selenouridine (Se2U-RNA). Acts in a two-step process involving geranylation of 2-thiouridine (S2U) to S-geranyl-2-thiouridine (geS2U) and subsequent selenation of the latter derivative to 2-selenouridine (Se2U) in the tRNA chain. This is tRNA 2-selenouridine synthase from Shewanella baltica (strain OS155 / ATCC BAA-1091).